A 453-amino-acid chain; its full sequence is Signal transduction histidine-protein kinase ArlS (453 aa).

2 helical membrane-spanning segments follow: residues 14–34 and 157–177; these read ITTLIMFSTIILFCLVIIFFL and FVAIAFGLLATFIMAGISYIF. Residues 179–232 form the HAMP domain; that stretch reads TQLTKPLVTMSNKMIQIRRDGFQNKLELKTNYEETDNLIDTFNDMMYQIEESFN. The 214-residue stretch at 240 to 453 folds into the Histidine kinase domain; sequence DASHELRTPL…QYTTFKIIFK (214 aa). His243 bears the Phosphohistidine; by autocatalysis mark.

Post-translationally, autophosphorylated.

The protein localises to the cell membrane. The catalysed reaction is ATP + protein L-histidine = ADP + protein N-phospho-L-histidine.. Functionally, member of the two-component regulatory system ArlS/ArlR. ArlS probably functions as a sensor protein kinase which is autophosphorylated at a histidine residue and transfers its phosphate group to ArlR. The sequence is that of Signal transduction histidine-protein kinase ArlS (arlS) from Staphylococcus haemolyticus (strain JCSC1435).